The chain runs to 204 residues: Thiamine-phosphate synthase (204 aa).

Residues 35–39 (QVREK) and asparagine 67 contribute to the 4-amino-2-methyl-5-(diphosphooxymethyl)pyrimidine site. Positions 68 and 87 each coordinate Mg(2+). Position 106 (serine 106) interacts with 4-amino-2-methyl-5-(diphosphooxymethyl)pyrimidine. 132–134 (TPT) provides a ligand contact to 2-[(2R,5Z)-2-carboxy-4-methylthiazol-5(2H)-ylidene]ethyl phosphate. Residue lysine 135 coordinates 4-amino-2-methyl-5-(diphosphooxymethyl)pyrimidine. Residues glycine 163 and 183 to 184 (VS) contribute to the 2-[(2R,5Z)-2-carboxy-4-methylthiazol-5(2H)-ylidene]ethyl phosphate site.

This sequence belongs to the thiamine-phosphate synthase family. Mg(2+) is required as a cofactor.

The enzyme catalyses 2-[(2R,5Z)-2-carboxy-4-methylthiazol-5(2H)-ylidene]ethyl phosphate + 4-amino-2-methyl-5-(diphosphooxymethyl)pyrimidine + 2 H(+) = thiamine phosphate + CO2 + diphosphate. It catalyses the reaction 2-(2-carboxy-4-methylthiazol-5-yl)ethyl phosphate + 4-amino-2-methyl-5-(diphosphooxymethyl)pyrimidine + 2 H(+) = thiamine phosphate + CO2 + diphosphate. The catalysed reaction is 4-methyl-5-(2-phosphooxyethyl)-thiazole + 4-amino-2-methyl-5-(diphosphooxymethyl)pyrimidine + H(+) = thiamine phosphate + diphosphate. It functions in the pathway cofactor biosynthesis; thiamine diphosphate biosynthesis; thiamine phosphate from 4-amino-2-methyl-5-diphosphomethylpyrimidine and 4-methyl-5-(2-phosphoethyl)-thiazole: step 1/1. Functionally, condenses 4-methyl-5-(beta-hydroxyethyl)thiazole monophosphate (THZ-P) and 2-methyl-4-amino-5-hydroxymethyl pyrimidine pyrophosphate (HMP-PP) to form thiamine monophosphate (TMP). This is Thiamine-phosphate synthase from Vibrio campbellii (strain ATCC BAA-1116).